Reading from the N-terminus, the 389-residue chain is Chalcone synthase 1A (389 aa).

The active site involves cysteine 164.

This sequence belongs to the thiolase-like superfamily. Chalcone/stilbene synthases family.

It catalyses the reaction (E)-4-coumaroyl-CoA + 3 malonyl-CoA + 3 H(+) = 2',4,4',6'-tetrahydroxychalcone + 3 CO2 + 4 CoA. Its pathway is secondary metabolite biosynthesis; flavonoid biosynthesis. In terms of biological role, the primary product of this enzyme is 4,2',4',6'-tetrahydroxychalcone (also termed naringenin-chalcone or chalcone) which can under specific conditions spontaneously isomerize into naringenin. This Pisum sativum (Garden pea) protein is Chalcone synthase 1A (CHS-1A).